Consider the following 1205-residue polypeptide: ATP-dependent DNA helicase MER3 homolog (1205 aa).

A Helicase ATP-binding domain is found at 41–236 (PACFLSDVNM…WLAVPSEGIK (196 aa)). An ATP-binding site is contributed by 54-61 (APTGSGKT). The DEAH box signature appears at 172–175 (DEVH). The Helicase C-terminal domain maps to 266–467 (RLQSFIFDIL…CAVEHLNAEI (202 aa)). The region spanning 541-852 (PLEPGRLMTK…FEEYVGLDIH (312 aa)) is the SEC63 domain. Over residues 1075–1091 (QKSEILNRTQGKNSTQL) the composition is skewed to polar residues. The tract at residues 1075–1131 (QKSEILNRTQGKNSTQLAGKKAFEKSKTPDENSLHFVGKRDSSSEKSKALSKTPDEN) is disordered. A compositionally biased stretch (basic and acidic residues) spans 1095-1122 (KAFEKSKTPDENSLHFVGKRDSSSEKSK).

This sequence belongs to the helicase family. SKI2 subfamily. Transcribed preferentially in early stages of meiocyte development and during meiosis in young flowers.

The protein localises to the nucleus. The protein resides in the chromosome. It catalyses the reaction Couples ATP hydrolysis with the unwinding of duplex DNA by translocating in the 3'-5' direction.. It carries out the reaction ATP + H2O = ADP + phosphate + H(+). Functionally, DNA helicase required for crossover formation, complete synapsis of homologous chromosomes and bivalent formation during meiosis. Is specific to recombination events resulting in interference-sensitive crossovers (class I meiotic crossover). Works cooperatively with ZIP4 to promote crossovers. In Oryza sativa subsp. japonica (Rice), this protein is ATP-dependent DNA helicase MER3 homolog.